The following is a 513-amino-acid chain: Glutamyl-tRNA(Gln) amidotransferase subunit A (513 aa).

Residues Lys-85 and Ser-160 each act as charge relay system in the active site. The active-site Acyl-ester intermediate is Ser-184.

The protein belongs to the amidase family. GatA subfamily. In terms of assembly, heterotrimer of A, B and C subunits.

It catalyses the reaction L-glutamyl-tRNA(Gln) + L-glutamine + ATP + H2O = L-glutaminyl-tRNA(Gln) + L-glutamate + ADP + phosphate + H(+). Functionally, allows the formation of correctly charged Gln-tRNA(Gln) through the transamidation of misacylated Glu-tRNA(Gln) in organisms which lack glutaminyl-tRNA synthetase. The reaction takes place in the presence of glutamine and ATP through an activated gamma-phospho-Glu-tRNA(Gln). This Bifidobacterium longum (strain NCC 2705) protein is Glutamyl-tRNA(Gln) amidotransferase subunit A.